Here is a 549-residue protein sequence, read N- to C-terminus: Oxygen-dependent choline dehydrogenase (549 aa).

4–33 (DFVIIGSGSAGSAMAYRLSEDGRYSVIVIE) provides a ligand contact to FAD. Catalysis depends on His465, which acts as the Proton acceptor.

This sequence belongs to the GMC oxidoreductase family. It depends on FAD as a cofactor.

It carries out the reaction choline + A = betaine aldehyde + AH2. The catalysed reaction is betaine aldehyde + NAD(+) + H2O = glycine betaine + NADH + 2 H(+). It participates in amine and polyamine biosynthesis; betaine biosynthesis via choline pathway; betaine aldehyde from choline (cytochrome c reductase route): step 1/1. Functionally, involved in the biosynthesis of the osmoprotectant glycine betaine. Catalyzes the oxidation of choline to betaine aldehyde and betaine aldehyde to glycine betaine at the same rate. The protein is Oxygen-dependent choline dehydrogenase of Brucella anthropi (strain ATCC 49188 / DSM 6882 / CCUG 24695 / JCM 21032 / LMG 3331 / NBRC 15819 / NCTC 12168 / Alc 37) (Ochrobactrum anthropi).